A 709-amino-acid chain; its full sequence is ATP-binding cassette sub-family F member 3 (709 aa).

A2 bears the N-acetylalanine mark. S83 bears the Phosphoserine mark. Over residues 129–143 (RLKAKQEKRSEKDTL) the composition is skewed to basic and acidic residues. The disordered stretch occupies residues 129 to 171 (RLKAKQEKRSEKDTLKTSNPLVLEEASASQAGSRKESRLESSG). 3 positions are modified to phosphoserine: S155, S157, and S161. The segment covering 161-171 (SRKESRLESSG) has biased composition (basic and acidic residues). ABC transporter domains are found at residues 178–424 (VRIE…LNQQ) and 492–707 (LQLD…RREG). 210–217 (GRNGLGKT) is a binding site for ATP. S283 carries the phosphoserine modification. Position 525–532 (525–532 (GENGAGKS)) interacts with ATP.

It belongs to the ABC transporter superfamily. ABCF family. EF3 subfamily.

In terms of biological role, displays an antiviral effect against flaviviruses such as west Nile virus (WNV) in the presence of OAS1B. The chain is ATP-binding cassette sub-family F member 3 (ABCF3) from Homo sapiens (Human).